Consider the following 484-residue polypeptide: Zinc metalloproteinase homolog-disintegrin albolatin (484 aa).

Positions 1–20 (MIQVLLVTICLAVFPYQGSS) are cleaved as a signal peptide. Residues 21 to 191 (IILESGNVND…KTSQLNLPLL (171 aa)) constitute a propeptide that is removed on maturation. Asn80, Asn251, and Asn301 each carry an N-linked (GlcNAc...) asparagine glycan. The region spanning 194–392 (RCIELVMVAD…WTSYCLYNEP (199 aa)) is the Peptidase M12B domain. 10 cysteine pairs are disulfide-bonded: Cys305-Cys387, Cys345-Cys369, Cys347-Cys352, Cys403-Cys422, Cys414-Cys432, Cys416-Cys427, Cys426-Cys449, Cys440-Cys446, Cys445-Cys470, and Cys458-Cys477. The Disintegrin domain occupies 400 to 484 (PPVCGNYYLE…GDCPWIGYYG (85 aa)). Residues 462 to 464 (KGD) carry the Cell attachment site; atypical (KGD) motif.

It belongs to the venom metalloproteinase (M12B) family. P-II subfamily. P-IIb sub-subfamily. As to quaternary structure, homodimer; disulfide-linked (disintegrin). Expressed by the venom gland.

The protein localises to the secreted. In terms of biological role, the function of this complete protein has not been studied, but it may be similar to the function of the disintegrin domain. A recombinant protein of this domain (409-484) inhibits collagen-induced human platelet aggregation, without having effect on ADP-induced aggregation. It may act either by blocking the binding of fibrinogen to the platelet receptor GPIIb/GPIIIa (ITGA2B/ITGB3) or by blocking the binding of collagen to the integrin alpha-2/beta-1 complex (ITGA2/ITGB1). This Trimeresurus albolabris (White-lipped pit viper) protein is Zinc metalloproteinase homolog-disintegrin albolatin.